Consider the following 355-residue polypeptide: MFADKLHPFLDRYDEISTLLSDPNIANDIEKMTKLSKEQSSIEPVATAATKYLQILNDIEENKALLEDAELGELAKEELKSLEISREKLEEEIKILLLPKDPNDDKNIFLEIRAGTGGDEAALFAGDLFNAYIRYAELRGYKFEIVSQSEGNTGGFKEIIVLIKGKGAYSRLKFEGGTHRVQRVPETESQGRVHTSAVTVAIMPEVEDSEIEINPNDIRVDVMRSSGHGGQSVNTTDSAVRITHIPTGLVVTNQDGKSQHKNKEAAMKVLKARLYEMQEQERLAKETSERKSQVGTGDRSGRIRTYNYPQNRISDHRINLTLYRLDAIMAAGLFDEIIEPLITHYQAEAMLEAGI.

Residue Gln-231 is modified to N5-methylglutamine. Basic and acidic residues predominate over residues 283–292; it reads LAKETSERKS. Residues 283-306 are disordered; the sequence is LAKETSERKSQVGTGDRSGRIRTY.

This sequence belongs to the prokaryotic/mitochondrial release factor family. Post-translationally, methylated by PrmC. Methylation increases the termination efficiency of RF1.

It localises to the cytoplasm. Its function is as follows. Peptide chain release factor 1 directs the termination of translation in response to the peptide chain termination codons UAG and UAA. The chain is Peptide chain release factor 1 from Campylobacter concisus (strain 13826).